Here is a 247-residue protein sequence, read N- to C-terminus: 1-(5-phosphoribosyl)-5-[(5-phosphoribosylamino)methylideneamino] imidazole-4-carboxamide isomerase (247 aa).

The active-site Proton acceptor is the Asp8. The active-site Proton donor is Asp131.

This sequence belongs to the HisA/HisF family.

The protein localises to the cytoplasm. It catalyses the reaction 1-(5-phospho-beta-D-ribosyl)-5-[(5-phospho-beta-D-ribosylamino)methylideneamino]imidazole-4-carboxamide = 5-[(5-phospho-1-deoxy-D-ribulos-1-ylimino)methylamino]-1-(5-phospho-beta-D-ribosyl)imidazole-4-carboxamide. The protein operates within amino-acid biosynthesis; L-histidine biosynthesis; L-histidine from 5-phospho-alpha-D-ribose 1-diphosphate: step 4/9. This is 1-(5-phosphoribosyl)-5-[(5-phosphoribosylamino)methylideneamino] imidazole-4-carboxamide isomerase from Acidovorax sp. (strain JS42).